The chain runs to 809 residues: Probable disease resistance protein At5g66900 (809 aa).

The region spanning 1–150 (MNDWASLGIG…LSKRMDLLSV (150 aa)) is the RPW8 domain. A coiled-coil region spans residues 50 to 86 (PLTQKIDSMQKELDFGVKELKELRDTIERADVAVRKF). 2 consecutive NB-ARC domains span residues 153 to 280 (PVFR…DDVW) and 339 to 438 (SPDE…DMWV). Residue 194–201 (APPGCGKT) participates in ATP binding. A coiled-coil region spans residues 494–515 (QSEFKENLERKRLNLEILENTF). 4 LRR repeats span residues 650 to 672 (KLQEIDIDYCYDLDELPYWISEI), 674 to 696 (SLKTLSITNCNKLSQLPEAIGNL), 698 to 720 (RLEVLRLCSSMNLSELPEATEGL), and 722 to 744 (NLRFLDISHCLGLRKLPQEIGKL).

Belongs to the disease resistance NB-LRR family.

Functionally, probable disease resistance protein. This is Probable disease resistance protein At5g66900 from Arabidopsis thaliana (Mouse-ear cress).